A 235-amino-acid chain; its full sequence is Derlin-3 (235 aa).

The Cytoplasmic portion of the chain corresponds to 1–22 (MAWQGLAAEFLQVPAVTRAYTA). Residues 23–43 (ACVLTTAAVQLELLSPFQLYF) form a helical membrane-spanning segment. Residues 44-58 (NPHLVFRKFQVWRLV) are Lumenal-facing. A helical transmembrane segment spans residues 59 to 79 (TNFLFFGPLGFSFFFNMLFVF). Residues 80-98 (RYCRMLEEGSFRGRTADFV) are Cytoplasmic-facing. The helical transmembrane segment at 99–119 (FMFLFGGVLMTLLGLLGSLFF) threads the bilayer. At 120–157 (LGQALMAMLVYVWSRRSPRVRVNFFGLLTFQAPFLPWA) the chain is on the lumenal side. Residues 158-178 (LMGFSLLLGNSILVDLLGIAV) traverse the membrane as a helical segment. Residues 179-235 (GHIYYFLEDVFPNQPGGKRLLQTPGFLKLLLDAPAEDPNYLPLPEEQPGPHLPPPQQ) are Cytoplasmic-facing. The tract at residues 216-235 (PNYLPLPEEQPGPHLPPPQQ) is disordered. Over residues 223-235 (EEQPGPHLPPPQQ) the composition is skewed to pro residues.

The protein belongs to the derlin family. In terms of assembly, forms homo- and heterooligomers with DERL2 and, to a lesser extent, with DERL1. Interacts with VCP and EDEM1. Interacts with SELENOK and SELENOS. Interacts with the signal recognition particle/SRP and the SRP receptor; in the process of endoplasmic reticulum stress-induced pre-emptive quality control. In terms of tissue distribution, unlike DERL1 and DERL2, restricted to several tissues. Expressed at high levels in placenta, pancreas, spleen and small intestine.

The protein localises to the endoplasmic reticulum membrane. Its function is as follows. Functional component of endoplasmic reticulum-associated degradation (ERAD) for misfolded lumenal glycoproteins, but not that of misfolded nonglycoproteins. May act by forming a channel that allows the retrotranslocation of misfolded glycoproteins into the cytosol where they are ubiquitinated and degraded by the proteasome. May mediate the interaction between VCP and the misfolded glycoproteins. May be involved in endoplasmic reticulum stress-induced pre-emptive quality control, a mechanism that selectively attenuates the translocation of newly synthesized proteins into the endoplasmic reticulum and reroutes them to the cytosol for proteasomal degradation. In Homo sapiens (Human), this protein is Derlin-3.